Here is a 155-residue protein sequence, read N- to C-terminus: Endoribonuclease YbeY (155 aa).

A disordered region spans residues 64–84 (SFPMDEMRAPGDDEDPPSGLL). 3 residues coordinate Zn(2+): His115, His119, and His125.

It belongs to the endoribonuclease YbeY family. Zn(2+) serves as cofactor.

It localises to the cytoplasm. Functionally, single strand-specific metallo-endoribonuclease involved in late-stage 70S ribosome quality control and in maturation of the 3' terminus of the 16S rRNA. This is Endoribonuclease YbeY from Cutibacterium acnes (strain DSM 16379 / KPA171202) (Propionibacterium acnes).